Reading from the N-terminus, the 357-residue chain is DNA integrity scanning protein DisA (357 aa).

Residues 3 to 141 (RPTLRETVAR…GGERHVVADS (139 aa)) form the DAC domain. ATP is bound by residues Gly70, Leu88, and 101 to 105 (TRHRS).

It belongs to the DisA family. As to quaternary structure, homooctamer. Mg(2+) is required as a cofactor.

The enzyme catalyses 2 ATP = 3',3'-c-di-AMP + 2 diphosphate. Participates in a DNA-damage check-point. DisA forms globular foci that rapidly scan along the chromosomes searching for lesions. Functionally, also has diadenylate cyclase activity, catalyzing the condensation of 2 ATP molecules into cyclic di-AMP (c-di-AMP). c-di-AMP likely acts as a signaling molecule that may couple DNA integrity with a cellular process. This Mycobacterium avium (strain 104) protein is DNA integrity scanning protein DisA.